A 490-amino-acid polypeptide reads, in one-letter code: Membrane-bound lytic murein transglycosylase F (490 aa).

Residues 1–32 form the signal peptide; the sequence is MFALTAYRLRCAAWLLATGIFLLLAGCSEAKA. Residues 33-269 form a non-LT domain region; that stretch reads PTALERVQKE…RLKDRYYGHV (237 aa). An LT domain region spans residues 270–490; sequence DVLGYVGAYT…PEEDSGDEKL (221 aa). Residue Glu-316 is part of the active site. Residues 467 to 490 are disordered; the sequence is AESGLHLPGVNKTRPEEDSGDEKL. Residues 479–490 show a composition bias toward basic and acidic residues; the sequence is TRPEEDSGDEKL.

It in the N-terminal section; belongs to the bacterial solute-binding protein 3 family. The protein in the C-terminal section; belongs to the transglycosylase Slt family.

The protein localises to the cell outer membrane. The catalysed reaction is Exolytic cleavage of the (1-&gt;4)-beta-glycosidic linkage between N-acetylmuramic acid (MurNAc) and N-acetylglucosamine (GlcNAc) residues in peptidoglycan, from either the reducing or the non-reducing ends of the peptidoglycan chains, with concomitant formation of a 1,6-anhydrobond in the MurNAc residue.. Functionally, murein-degrading enzyme that degrades murein glycan strands and insoluble, high-molecular weight murein sacculi, with the concomitant formation of a 1,6-anhydromuramoyl product. Lytic transglycosylases (LTs) play an integral role in the metabolism of the peptidoglycan (PG) sacculus. Their lytic action creates space within the PG sacculus to allow for its expansion as well as for the insertion of various structures such as secretion systems and flagella. The polypeptide is Membrane-bound lytic murein transglycosylase F (Pseudomonas aeruginosa (strain ATCC 15692 / DSM 22644 / CIP 104116 / JCM 14847 / LMG 12228 / 1C / PRS 101 / PAO1)).